A 281-amino-acid polypeptide reads, in one-letter code: MSEYQPSLFALNPMGFSPLDGSKSTNENVSASTSTAKPMVGQLIFDKFIKTEEDPIIKQDTPSNLDFDFALPQTATAPDAKTVLPIPELDDAVVESFFSSSTDSTPMFEYENLEDNSKEWTSLFDNDIPVTTDDVSLADKAIESTEEVSLVPSNLEVSTTSFLPTPVLEDAKLTQTRKVKKPNSVVKKSHHVGKDDESRLDHLGVVAYNRKQRSIPLSPIVPESSDPAALKRARNTEAARRSRARKLQRMKQLEDKVEELLSKNYHLENEVARLKKLVGER.

The residue at position 17 (Ser-17) is a Phosphoserine. Required for transcriptional activation regions lie at residues 89–100 and 106–125; these read LDDAVVESFFSS and PMFEYENLEDNSKEWTSLFD. At Thr-165 the chain carries Phosphothreonine; by PHO85. The short motif at 167 to 200 is the Nuclear localization signal element; that stretch reads VLEDAKLTQTRKVKKPNSVVKKSHHVGKDDESRL. A disordered region spans residues 217-248; the sequence is LSPIVPESSDPAALKRARNTEAARRSRARKLQ. Position 218 is a phosphoserine (Ser-218). A bZIP domain is found at 225 to 281; that stretch reads SDPAALKRARNTEAARRSRARKLQRMKQLEDKVEELLSKNYHLENEVARLKKLVGER. The short motif at 231–249 is the Nuclear localization signal element; sequence KRARNTEAARRSRARKLQR. Residues 231 to 251 form a basic motif region; it reads KRARNTEAARRSRARKLQRMK. The tract at residues 253–274 is leucine-zipper; sequence LEDKVEELLSKNYHLENEVARL.

The protein belongs to the bZIP family. GCN4 subfamily. As to quaternary structure, homodimer. Each subunit binds overlapping and non-identical half-sites that flank the central CG base-pair in the pseudo-palindromic motif 5'-ATGA[CG]TCAT-3'. Interacts with the mediator tail; the interaction with GAL11/MED15 is direct. Interacts with the SAGA histone acetyltransferase complex. Interacts with the SWI/SNF chromatin remodeling complex. In terms of processing, phosphorylated by the cyclin-CDK PCL5-PHO85. Phosphorylation of Thr-165 induces degradation of GCN4 by the E3 ubiquitin ligase complex SCF(Cdc4).

It is found in the nucleus. Master transcriptional regulator that mediates the response to amino acid starvation. Binds variations of the DNA sequence 5'-ATGA[CG]TCAT-3' in canonical nucleosome-depleted 5'-positioned promoters, and also within coding sequences and 3' non-coding regions. During nutrient starvation (low or poor amino acid, carbon or purine sources), it activates genes required for amino acid biosynthesis and transport, autophagy, cofactor biosynthesis and transport, mitochondrial transport, and additional downstream transcription factors. Activates transcription by recruiting multiple coactivators, including the mediator complex, the SAGA complex, and the SWI/SNF complex, to enable assembly of the pre-initiation complex at core promoters. This is General control transcription factor GCN4 from Saccharomyces cerevisiae (strain ATCC 204508 / S288c) (Baker's yeast).